We begin with the raw amino-acid sequence, 191 residues long: Ubiquinol-cytochrome c reductase iron-sulfur subunit (191 aa).

A helical transmembrane segment spans residues 18-35 (ATAATGVVVTGAAVWPLI). Residues 94-189 (RDTSAENANK…AAFVDETTIK (96 aa)) enclose the Rieske domain. Residues 95–116 (DTSAENANKPGAEATDENRTLP) form a disordered region. Residues cysteine 133, histidine 135, cysteine 153, and histidine 156 each coordinate [2Fe-2S] cluster. An intrachain disulfide couples cysteine 138 to cysteine 155.

This sequence belongs to the Rieske iron-sulfur protein family. In terms of assembly, the main subunits of complex b-c1 are: cytochrome b, cytochrome c1 and the Rieske protein. [2Fe-2S] cluster is required as a cofactor.

It is found in the cell membrane. It carries out the reaction a quinol + 2 Fe(III)-[cytochrome c](out) = a quinone + 2 Fe(II)-[cytochrome c](out) + 2 H(+)(out). In terms of biological role, component of the ubiquinol-cytochrome c reductase complex (complex III or cytochrome b-c1 complex), which is a respiratory chain that generates an electrochemical potential coupled to ATP synthesis. The protein is Ubiquinol-cytochrome c reductase iron-sulfur subunit (petA) of Rhodobacter capsulatus (strain ATCC BAA-309 / NBRC 16581 / SB1003).